Here is a 356-residue protein sequence, read N- to C-terminus: Popeye domain-containing protein 1 (356 aa).

The Extracellular segment spans residues 1–48 (MNFTEPSPLAQSTVVGFLPELESLTPVPSNETSCENWREVHHLVFHAA). N-linked (GlcNAc...) asparagine glycans are attached at residues N2 and N30. Residues 49 to 69 (NVCFAVGLLIPTTLHLHMILL) traverse the membrane as a helical segment. Residue R70 is a topological domain, cytoplasmic. The helical transmembrane segment at 71 to 91 (VMLSIGCTLYVVWATLYRCAL) threads the bilayer. Residue D92 is a topological domain, extracellular. The chain crosses the membrane as a helical span at residues 93-113 (MMIWNSVFLGINILHLSYLLY). Residues 93–115 (MMIWNSVFLGINILHLSYLLYKK) form a required for interaction with CAV3 region. Residues 114 to 356 (KKRPVKIEKD…VPVSPAHQLP (243 aa)) lie on the Cytoplasmic side of the membrane. Residues 136-186 (RVPPDLFRRLTGQFCVIQTLKRGQVYATEDKTSVDDRLSILLKGRMKVSYR) form a required for interaction with KCNK2 region. S295 and S318 each carry phosphoserine. Over residues 313–323 (SSSTASLPMSS) the composition is skewed to low complexity. Residues 313–356 (SSSTASLPMSSPQQRASPKMKPIEEGLEDDDEVFVPVSPAHQLP) are disordered.

This sequence belongs to the popeye family. In terms of assembly, homodimer. Homodimerization requires the C-terminus cytoplasmic region. Interacts (via the C-terminus cytoplasmic tail) with TJP1. Interacts (via the C-terminus cytoplasmic tail) with ARHGEF25/GEFT (via the DH domain). Interacts (via the C-terminus cytoplasmic tail) with VAMP3. Interacts with KCNK2; the interaction enhances KCNK2 surface expression and is inhibited by cAMP. Interacts with CAV3. As to expression, strongly expressed in heart and skeletal muscle. Weakly expressed in brain, spleen, liver, kidney and lung.

It localises to the lateral cell membrane. Its subcellular location is the cell junction. It is found in the tight junction. The protein resides in the membrane. The protein localises to the cell membrane. It localises to the sarcolemma. Its subcellular location is the caveola. Cell adhesion molecule involved in the establishment and/or maintenance of cell integrity. Involved in the formation and regulation of the tight junction (TJ) paracellular permeability barrier in epithelial cells. Plays a role in VAMP3-mediated vesicular transport and recycling of different receptor molecules through its interaction with VAMP3. Plays a role in the regulation of cell shape and movement by modulating the Rho-family GTPase activity through its interaction with ARHGEF25/GEFT. Induces primordial adhesive contact and aggregation of epithelial cells in a Ca(2+)-independent manner. Important for skeletal muscle and heart development. Also involved in striated muscle regeneration and repair and in the regulation of cell spreading. Important for the maintenance of cardiac function. Plays a regulatory function in heart rate dynamics mediated, at least in part, through cAMP-binding and, probably, by increasing cell surface expression of the potassium channel KCNK2 and enhancing current density. Is a caveolae-associated protein important for the preservation of caveolae structural and functional integrity as well as for heart protection against ischemia injury. In Rattus norvegicus (Rat), this protein is Popeye domain-containing protein 1 (Popdc1).